Here is a 101-residue protein sequence, read N- to C-terminus: Small ribosomal subunit protein bS18c (101 aa).

Residues 1 to 19 (MDKSKRPFRKSKRSFRKRL) show a composition bias toward basic residues. The tract at residues 1-23 (MDKSKRPFRKSKRSFRKRLPPIG) is disordered.

Belongs to the bacterial ribosomal protein bS18 family. Part of the 30S ribosomal subunit.

Its subcellular location is the plastid. It localises to the chloroplast. The polypeptide is Small ribosomal subunit protein bS18c (Chloranthus spicatus (Chulantree)).